A 208-amino-acid chain; its full sequence is Large ribosomal subunit protein uL4 (208 aa).

The interval 42–77 (SMRQGTHKTKTKTEVSGGGRKPWRQKGTGRARQGSI) is disordered.

The protein belongs to the universal ribosomal protein uL4 family. In terms of assembly, part of the 50S ribosomal subunit.

Its function is as follows. One of the primary rRNA binding proteins, this protein initially binds near the 5'-end of the 23S rRNA. It is important during the early stages of 50S assembly. It makes multiple contacts with different domains of the 23S rRNA in the assembled 50S subunit and ribosome. Forms part of the polypeptide exit tunnel. The protein is Large ribosomal subunit protein uL4 of Spiroplasma kunkelii.